Consider the following 1894-residue polypeptide: Plexin-A2 (1894 aa).

An N-terminal signal peptide occupies residues methionine 1–glycine 34. 2 N-linked (GlcNAc...) asparagine glycosylation sites follow: asparagine 15 and asparagine 76. The Sema domain maps to methionine 35–valine 508. Residues methionine 35–proline 1237 are Extracellular-facing. Disulfide bonds link cysteine 94-cysteine 103 and cysteine 129-cysteine 137. Residues asparagine 163 and asparagine 327 are each glycosylated (N-linked (GlcNAc...) asparagine). Intrachain disulfides connect cysteine 284–cysteine 405, cysteine 300–cysteine 356, cysteine 374–cysteine 393, cysteine 511–cysteine 528, cysteine 517–cysteine 559, cysteine 520–cysteine 537, cysteine 531–cysteine 543, and cysteine 594–cysteine 613. Residues asparagine 598, asparagine 696, and asparagine 756 are each glycosylated (N-linked (GlcNAc...) asparagine). IPT/TIG domains lie at proline 858–phenylalanine 951, proline 954–tyrosine 1037, proline 1041–tyrosine 1139, and proline 1143–valine 1228. 2 N-linked (GlcNAc...) asparagine glycosylation sites follow: asparagine 1180 and asparagine 1205. Residues alanine 1238–isoleucine 1258 traverse the membrane as a helical segment. Topologically, residues alanine 1259–serine 1894 are cytoplasmic. Positions lysine 1261–serine 1310 form a coiled coil. Position 1612 is a phosphoserine (serine 1612).

This sequence belongs to the plexin family. Homodimer. Interacts with RND1. Interacts directly with NRP1 and NRP2. The PLXNA2 homodimer interacts with a SEMA6A homodimer, giving rise to a heterotetramer.

Its subcellular location is the cell membrane. Its function is as follows. Coreceptor for SEMA3A and SEMA6A. Necessary for signaling by SEMA6A and class 3 semaphorins and subsequent remodeling of the cytoskeleton. Plays a role in axon guidance, invasive growth and cell migration. Class 3 semaphorins bind to a complex composed of a neuropilin and a plexin. The plexin modulates the affinity of the complex for specific semaphorins, and its cytoplasmic domain is required for the activation of down-stream signaling events in the cytoplasm. In Mus musculus (Mouse), this protein is Plexin-A2 (Plxna2).